A 278-amino-acid polypeptide reads, in one-letter code: Orotidine 5'-phosphate decarboxylase (278 aa).

Residues aspartate 40, 62 to 64, 93 to 102, tyrosine 223, and arginine 242 contribute to the substrate site; these read KTH and DRKFADIGNT. Lysine 95 serves as the catalytic Proton donor.

This sequence belongs to the OMP decarboxylase family.

It carries out the reaction orotidine 5'-phosphate + H(+) = UMP + CO2. Its pathway is pyrimidine metabolism; UMP biosynthesis via de novo pathway; UMP from orotate: step 2/2. The polypeptide is Orotidine 5'-phosphate decarboxylase (URA1) (Schizophyllum commune (Split gill fungus)).